Reading from the N-terminus, the 199-residue chain is UPF0301 protein Rfer_1377 (199 aa).

This sequence belongs to the UPF0301 (AlgH) family.

The chain is UPF0301 protein Rfer_1377 from Albidiferax ferrireducens (strain ATCC BAA-621 / DSM 15236 / T118) (Rhodoferax ferrireducens).